We begin with the raw amino-acid sequence, 460 residues long: Cysteine--tRNA ligase (460 aa).

Residue Cys28 coordinates Zn(2+). Positions 30–40 (MTVYDYCHLGH) match the 'HIGH' region motif. Cys209, His234, and Glu238 together coordinate Zn(2+). The 'KMSKS' region signature appears at 266–270 (KMSKS). ATP is bound at residue Lys269.

It belongs to the class-I aminoacyl-tRNA synthetase family. As to quaternary structure, monomer. Zn(2+) serves as cofactor.

The protein resides in the cytoplasm. The enzyme catalyses tRNA(Cys) + L-cysteine + ATP = L-cysteinyl-tRNA(Cys) + AMP + diphosphate. The polypeptide is Cysteine--tRNA ligase (Pseudomonas syringae pv. syringae (strain B728a)).